Reading from the N-terminus, the 1013-residue chain is Polyprotein of EF-Ts, chloroplastic (1013 aa).

The transit peptide at 1–43 (MLRELGRTATVKAHGRSVLRPVRGPAGRRQVAFTGVRPSVRVF) directs the protein to the chloroplast. The region spanning 64–133 (GSEYEGTVTT…EKKRVSLELK (70 aa)) is the S1 motif 1 domain. A compositionally biased stretch (acidic residues) spans 141-150 (SAEESDDIIT). Residues 141–163 (SAEESDDIITEPDREGADATDDD) form a disordered region. An S1 motif 2 domain is found at 227 to 331 (MEEVTGKVAR…DGRGISLTHF (105 aa)). Positions 772–798 (QAKAAAPAAPKKEEPKKEEPKKATVAV) are disordered. The segment covering 781 to 793 (PKKEEPKKEEPKK) has biased composition (basic and acidic residues).

The protein belongs to the EF-Ts family. Component of the chloroplast ribosome 30S and 70S subunits, as well as polysomes. In terms of assembly, component of the chloroplast ribosome 70S subunit, and at low levels, present in polysomes. As to quaternary structure, associates transiently with chloroplast polysomes.

It is found in the plastid. The protein resides in the chloroplast. In terms of biological role, associates with the EF-Tu.GDP complex and induces the exchange of GDP to GTP. It remains bound to the aminoacyl-tRNA.EF-Tu.GTP complex up to the GTP hydrolysis stage on the ribosome. Binds to psbD and psbA mRNAs 5'-untranslated regions (UTRs) in vitro. In Chlamydomonas reinhardtii (Chlamydomonas smithii), this protein is Polyprotein of EF-Ts, chloroplastic.